Here is a 71-residue protein sequence, read N- to C-terminus: Translation initiation factor IF-1 (71 aa).

Positions 1–71 constitute an S1-like domain; it reads MAKQSAIEQD…LSKARITYRY (71 aa).

This sequence belongs to the IF-1 family. In terms of assembly, component of the 30S ribosomal translation pre-initiation complex which assembles on the 30S ribosome in the order IF-2 and IF-3, IF-1 and N-formylmethionyl-tRNA(fMet); mRNA recruitment can occur at any time during PIC assembly.

Its subcellular location is the cytoplasm. One of the essential components for the initiation of protein synthesis. Stabilizes the binding of IF-2 and IF-3 on the 30S subunit to which N-formylmethionyl-tRNA(fMet) subsequently binds. Helps modulate mRNA selection, yielding the 30S pre-initiation complex (PIC). Upon addition of the 50S ribosomal subunit IF-1, IF-2 and IF-3 are released leaving the mature 70S translation initiation complex. The chain is Translation initiation factor IF-1 from Flavobacterium johnsoniae (strain ATCC 17061 / DSM 2064 / JCM 8514 / BCRC 14874 / CCUG 350202 / NBRC 14942 / NCIMB 11054 / UW101) (Cytophaga johnsonae).